Consider the following 216-residue polypeptide: 3-isopropylmalate dehydratase small subunit (216 aa).

Belongs to the LeuD family. LeuD type 1 subfamily. As to quaternary structure, heterodimer of LeuC and LeuD.

It carries out the reaction (2R,3S)-3-isopropylmalate = (2S)-2-isopropylmalate. Its pathway is amino-acid biosynthesis; L-leucine biosynthesis; L-leucine from 3-methyl-2-oxobutanoate: step 2/4. In terms of biological role, catalyzes the isomerization between 2-isopropylmalate and 3-isopropylmalate, via the formation of 2-isopropylmaleate. This Cupriavidus pinatubonensis (strain JMP 134 / LMG 1197) (Cupriavidus necator (strain JMP 134)) protein is 3-isopropylmalate dehydratase small subunit.